A 416-amino-acid polypeptide reads, in one-letter code: MCTTISFAEPEIVLGHGRRVLFVNPDDLQIFKEIELPPDLGLKCHETQSQESCPATATSTTAGKEPGGKEQQLAKQPEEGGTSASGSVATSTSVQNVAYSPDGQLLAVTTSGGQKALLLYRSRPENARLLSARPLARAASAVRFCSDSSSVLVTDKTGDCYQYDCVEVEAPPRLLLGHLSVVYDILWSEDQQHIITCDRDDKIRVTNYPATFDIHSYCLGHREFVSGLALLTEQHIASASGDKTLRVWNYIQGKELLQHELPAPAVRLLVRQLEPEKVFQAAVLFYEHVDALGLYRLERSSDDTWSVTATQLVCAEAGSWSISNFTLTSDRIYITGAENERLSLRVYDIATGQPTTNGVPEGWLKMVLDGLGANEEGAPPFIPEDLSVWFKKRFDNVTDYLERKKRRIEEQKQQKC.

Residues 47 to 88 (TQSQESCPATATSTTAGKEPGGKEQQLAKQPEEGGTSASGSV) form a disordered region. Polar residues predominate over residues 49-62 (SQESCPATATSTTA). 4 WD repeats span residues 89–130 (ATST…ARLL), 177–216 (GHLS…DIHS), 220–258 (GHRE…ELLQ), and 317–357 (AGSW…PTTN).

This sequence belongs to the WD repeat TRM82 family. In terms of assembly, forms a heterodimer with the catalytic subunit Mettl1. Interacts with mei-P26 and weakly interacts with bgcn; required for the function or formation of the mei-P26-bgcn-bam-sxl complex. Interacts with nanos; may be involved in mei-P26-dependent derepression of the BMP signaling pathway. Interacts with Myc; the interaction may be mediated by mei-P26 and may be involved in the regulation of ribosome biogenesis. In terms of tissue distribution, in testis, it is present at high level in hub cells, a niche for germline stem cells of testis. Ubiquitously expressed in all testicular cells throughout spermatogenesis. Ubiquitously expressed in all germline and somatic cells of the ovary.

The protein resides in the nucleus. The protein localises to the cytoplasm. It functions in the pathway tRNA modification; N(7)-methylguanine-tRNA biosynthesis. Its function is as follows. Required for the Mettl1-dependent formation of N(7)-methylguanine at position 46 (m7G46) in tRNA. In the Mettl1-wuho methyltransferase complex, it is required to stabilize and induce conformational changes of the catalytic subunit. Required for binding of nanos mRNA and repression of translation by the mei-P26-bgcn-bam-sxl complex. May cooperate with mei-P26 and nanos to derepress the BMP signaling pathway. May cooperate with mei-P26 to suppress expression of a subset of microRNAs. May cooperate with mei-P26 to regulate bam expression levels in germline cells during gametogenesis. Required to promote mitosis to meiosis transition during gametogenesis. May regulate germline cell division in part by regulating ribosome biogenesis. The sequence is that of tRNA (guanine-N(7)-)-methyltransferase non-catalytic subunit wuho from Drosophila erecta (Fruit fly).